The sequence spans 2462 residues: Serine/threonine-protein kinase Wnk (2462 aa).

Disordered stretches follow at residues 18–133, 146–248, and 365–461; these read NRAR…ASKS, NTLP…KSSS, and EDDV…DDDP. Polar residues-rich tracts occupy residues 29–58 and 65–78; these read DGTT…NIQK and NRSA…NPTS. Low complexity predominate over residues 94-124; sequence TLSAHTSTSSTTSIQSSPIEPASSLPTLNTT. Residues 146–155 are compositionally biased toward polar residues; it reads NTLPGKTASS. Basic and acidic residues-rich tracts occupy residues 190–205, 237–247, and 396–413; these read QSRE…KIEP, DTKKMEARKSS, and QSEK…KAES. The span at 414–452 shows a compositional bias: low complexity; sequence SEASAEEAAVTGSSTDASASPLPSTSLVSTTSSATSITK. The Protein kinase domain occupies 471–729; it reads FKYDKEVGRG…CNELLESEFF (259 aa). ATP contacts are provided by residues serine 481, 551–554, and lysine 601; that span reads TELM. Catalysis depends on aspartate 618, which acts as the Proton acceptor. A phosphoserine; by autocatalysis mark is found at serine 628 and serine 632. Disordered regions lie at residues 844–873, 893–923, and 1006–1055; these read LQKQ…DGVK, LALS…QPVQ, and PQQQ…LQQQ. A compositionally biased stretch (acidic residues) spans 855–870; that stretch reads VDEDEEEEEESEDEED. The span at 893 to 918 shows a compositional bias: polar residues; sequence LALSTNSVEPQQLSTRSNTSIPNSGI. Composition is skewed to low complexity over residues 1006-1034 and 1041-1055; these read PQQQ…QPQT and HEQQ…LQQQ. A coiled-coil region spans residues 1142–1178; that stretch reads AQHQLQQLQQQQLQQQQLQQQQQIQQQQLQQQQLQQQ. Positions 1236 to 1251 are enriched in polar residues; that stretch reads QGGQVTLSDAQQQQHP. 9 disordered regions span residues 1236 to 1256, 1322 to 1382, 1418 to 1465, 1554 to 1578, 1615 to 1699, 1762 to 1790, 1828 to 1895, 1929 to 1966, and 2122 to 2229; these read QGGQ…FSAV, QQQQ…EQIS, GALE…PKLS, LTRQ…SDIT, NIPN…KDKK, DTSE…GNQG, QASP…SVGS, HEKQ…SINQ, and THVQ…FIQS. The segment covering 1559–1568 has biased composition (basic residues); the sequence is STFRSHQRHR. Positions 1627–1641 are enriched in low complexity; it reads STPPTTTSTMSSSST. The span at 1642-1674 shows a compositional bias: polar residues; it reads ASRDAPNSSNDVTIGSGSVSRKTSTASEYTSLS. 3 stretches are compositionally biased toward polar residues: residues 1828-1852, 1861-1894, and 1943-1966; these read QASP…TKPN, SVGQ…NSVG, and SATS…SINQ. A compositionally biased stretch (low complexity) spans 2125-2136; it reads QQPSNLQPQQQS. Residues 2137–2160 are compositionally biased toward polar residues; that stretch reads VHPNMTQQPQQTPLNGHPSMVNTL. Low complexity predominate over residues 2161–2211; that stretch reads QQQPPQQSLPMQTIQSQQQQHNQMPIISQQQQQQILMQQQQQQGSQQGSQQ. The span at 2212-2229 shows a compositional bias: polar residues; the sequence is FNLPGTQQTHPQHQFIQS.

Belongs to the protein kinase superfamily. Ser/Thr protein kinase family. WNK subfamily. Mg(2+) is required as a cofactor. Autophosphorylated. Autophosphorylation at Ser-628 and Ser-632 promotes its activity.

Its subcellular location is the cytoplasm. It carries out the reaction L-seryl-[protein] + ATP = O-phospho-L-seryl-[protein] + ADP + H(+). It catalyses the reaction L-threonyl-[protein] + ATP = O-phospho-L-threonyl-[protein] + ADP + H(+). With respect to regulation, activated in response to hyperosmotic stress: cell shrinkage promotes formation of a membraneless compartment that concentrates wnk-1 with its downstrem substrates. Activation requires autophosphorylation. Autophosphorylation and subsequent activation is inhibited by increases in intracellular Cl(-) or K(+). Its function is as follows. Serine/threonine-protein kinase component of the WNK-SPAK/OSR1 kinase cascade, which plays an important role in the regulation of electrolyte homeostasis and regulatory volume increase in response to hyperosmotic stress. Wnk mediates regulatory volume increase in response to hyperosmotic stress by acting as a molecular crowding sensor, which senses cell shrinkage and mediates formation of a membraneless compartment by undergoing liquid-liquid phase separation. The membraneless compartment concentrates Wnk with its substrate Fray, promoting Wnk-dependent phosphorylation and activation of downstream kinase Fray. Following activation, Fray catalyzes phosphorylation of ion cotransporters Ncc69 and Irk1, regulating their activity. Phosphorylation of Na-K-Cl cotransporter Ncc69 promotes its activation and ion influx. Involved in circadian rhythms in small ventral lateral (sLNv) pacemaker neurons: in the morning, Wnk activity is repressed by high levels of intracellular chloride; in contrast Wnk activation in the evening promotes the activation of the inwardly rectifying potassium channel Irk1 via Fray. Acts as a positive regulator of the canonical Wnt signaling pathway during wing disk development. This chain is Serine/threonine-protein kinase Wnk, found in Drosophila melanogaster (Fruit fly).